The following is a 572-amino-acid chain: Urease subunit alpha (572 aa).

One can recognise a Urease domain in the interval 136 to 572; sequence GGIDTHIHFI…VPLGQRYFLF (437 aa). H141, H143, and K224 together coordinate Ni(2+). K224 carries the post-translational modification N6-carboxylysine. Residue H226 participates in substrate binding. 2 residues coordinate Ni(2+): H253 and H279. The Proton donor role is filled by H327. A Ni(2+)-binding site is contributed by D367.

This sequence belongs to the metallo-dependent hydrolases superfamily. Urease alpha subunit family. Heterotrimer of UreA (gamma), UreB (beta) and UreC (alpha) subunits. Three heterotrimers associate to form the active enzyme. Ni cation serves as cofactor. Carboxylation allows a single lysine to coordinate two nickel ions.

The protein localises to the cytoplasm. It catalyses the reaction urea + 2 H2O + H(+) = hydrogencarbonate + 2 NH4(+). It participates in nitrogen metabolism; urea degradation; CO(2) and NH(3) from urea (urease route): step 1/1. The sequence is that of Urease subunit alpha from Haemophilus influenzae (strain 86-028NP).